Consider the following 121-residue polypeptide: MGTGEKTLKSFQLHRKQSVKVKDVPKGCLAIKVGSQGEEQQRFIVPVLYFNHPLFMQLLKEAEDEYGFDQKGTITIPCHVEEFRYVQALIDGERSVYNGNNHHHRHGGRDQYHHLVGCFRA.

It belongs to the ARG7 family. Expressed in roots, leaves and stems.

Its subcellular location is the nucleus. The protein resides in the cytoplasm. May play a role in the apical hook development. This chain is Auxin-responsive protein SAUR32, found in Arabidopsis thaliana (Mouse-ear cress).